The chain runs to 218 residues: Ras-related protein R-Ras (218 aa).

The tract at residues 1–30 (MSSGAASGTGRGRPRGGGPGPRDPPPGETH) is disordered. A compositionally biased stretch (gly residues) spans 7-20 (SGTGRGRPRGGGPG). 36–44 (GGGGVGKSA) serves as a coordination point for GTP. Residues 58 to 66 (YDPTIEDSY) carry the Effector region motif. GTP-binding positions include 83 to 87 (DTAGQ), 142 to 145 (NKAD), and 172 to 174 (SAK). Cys215 is modified (cysteine methyl ester). A lipid anchor (S-geranylgeranyl cysteine) is attached at Cys215. The propeptide at 216 to 218 (VLL) is removed in mature form.

This sequence belongs to the small GTPase superfamily. Ras family. In terms of assembly, interacts with PLCE1. Interacts (active GTP-bound form preferentially) with RGS14. Interacts with OSBPL3. Interacts with ZDHHC19. Post-translationally, S-palmitoylated by ZDHHC19, leading to increased association with membranes and with rafts/caveolae as well as enhanced cell viability.

It is found in the cell membrane. The enzyme catalyses GTP + H2O = GDP + phosphate + H(+). Functionally, GTP-binding protein with GTPase activity, likely involved in the regulation of MAPK signaling pathway and thereby controlling multiple cellular processes. Regulates the organization of the actin cytoskeleton. With OSPBL3, modulates integrin beta-1 (ITGB1) activity. This chain is Ras-related protein R-Ras (Rras), found in Mus musculus (Mouse).